A 436-amino-acid chain; its full sequence is Ribulose bisphosphate carboxylase large chain (436 aa).

Lysine 4 bears the N6,N6,N6-trimethyllysine mark. Positions 113 and 163 each coordinate substrate. Lysine 165 functions as the Proton acceptor in the catalytic mechanism. Lysine 167 is a binding site for substrate. The Mg(2+) site is built by lysine 191, aspartate 193, and glutamate 194. Residue lysine 191 is modified to N6-carboxylysine. Histidine 284 functions as the Proton acceptor in the catalytic mechanism. Substrate is bound by residues arginine 285, histidine 317, and serine 369.

The protein belongs to the RuBisCO large chain family. Type I subfamily. Heterohexadecamer of 8 large chains and 8 small chains; disulfide-linked. The disulfide link is formed within the large subunit homodimers. Mg(2+) is required as a cofactor. Post-translationally, the disulfide bond which can form in the large chain dimeric partners within the hexadecamer appears to be associated with oxidative stress and protein turnover.

The protein localises to the plastid. It is found in the chloroplast. The enzyme catalyses 2 (2R)-3-phosphoglycerate + 2 H(+) = D-ribulose 1,5-bisphosphate + CO2 + H2O. It carries out the reaction D-ribulose 1,5-bisphosphate + O2 = 2-phosphoglycolate + (2R)-3-phosphoglycerate + 2 H(+). In terms of biological role, ruBisCO catalyzes two reactions: the carboxylation of D-ribulose 1,5-bisphosphate, the primary event in carbon dioxide fixation, as well as the oxidative fragmentation of the pentose substrate in the photorespiration process. Both reactions occur simultaneously and in competition at the same active site. The chain is Ribulose bisphosphate carboxylase large chain from Sanguinaria canadensis (Bloodroot).